A 360-amino-acid chain; its full sequence is Putative F-box protein At1g65770 (360 aa).

In terms of domain architecture, F-box spans 2 to 50 (ADWSTLPVDLLNMIAGRLFSNIELKRFRSICRSWRSSVPGAGKKNPFRT).

This chain is Putative F-box protein At1g65770, found in Arabidopsis thaliana (Mouse-ear cress).